The chain runs to 1057 residues: Carbamoyl phosphate synthase large chain (1057 aa).

The carboxyphosphate synthetic domain stretch occupies residues 1–401; that stretch reads MPKRNDIKTI…SLLKAIRSLE (401 aa). 12 residues coordinate ATP: R129, R169, G175, G176, K208, I210, E215, G241, I242, H243, Q284, and E298. The 195-residue stretch at 133 to 327 folds into the ATP-grasp 1 domain; sequence RTLMNYLNVP…IAKLAAKIAV (195 aa). The Mg(2+) site is built by Q284, E298, and N300. The Mn(2+) site is built by Q284, E298, and N300. The oligomerization domain stretch occupies residues 402–546; it reads YGVHHLGLPN…YGTYETENES (145 aa). The segment at 547 to 929 is carbamoyl phosphate synthetic domain; sequence IITDKEKILV…ALFKGLTGSG (383 aa). The 191-residue stretch at 671 to 861 folds into the ATP-grasp 2 domain; that stretch reads EALLRKINVP…MAQLAMRAII (191 aa). The ATP site is built by R707, R746, L748, E752, G777, V778, H779, S780, Q820, and E832. Q820, E832, and N834 together coordinate Mg(2+). Residues Q820, E832, and N834 each coordinate Mn(2+). The MGS-like domain maps to 930–1057; it reads VEVKDHGTVL…ESMTFTMRQM (128 aa). The interval 930–1057 is allosteric domain; it reads VEVKDHGTVL…ESMTFTMRQM (128 aa).

It belongs to the CarB family. As to quaternary structure, composed of two chains; the small (or glutamine) chain promotes the hydrolysis of glutamine to ammonia, which is used by the large (or ammonia) chain to synthesize carbamoyl phosphate. Tetramer of heterodimers (alpha,beta)4. Requires Mg(2+) as cofactor. Mn(2+) is required as a cofactor.

It catalyses the reaction hydrogencarbonate + L-glutamine + 2 ATP + H2O = carbamoyl phosphate + L-glutamate + 2 ADP + phosphate + 2 H(+). The enzyme catalyses hydrogencarbonate + NH4(+) + 2 ATP = carbamoyl phosphate + 2 ADP + phosphate + 2 H(+). The protein operates within amino-acid biosynthesis; L-arginine biosynthesis; carbamoyl phosphate from bicarbonate: step 1/1. Its pathway is pyrimidine metabolism; UMP biosynthesis via de novo pathway; (S)-dihydroorotate from bicarbonate: step 1/3. Its function is as follows. Large subunit of the glutamine-dependent carbamoyl phosphate synthetase (CPSase). CPSase catalyzes the formation of carbamoyl phosphate from the ammonia moiety of glutamine, carbonate, and phosphate donated by ATP, constituting the first step of 2 biosynthetic pathways, one leading to arginine and/or urea and the other to pyrimidine nucleotides. The large subunit (synthetase) binds the substrates ammonia (free or transferred from glutamine from the small subunit), hydrogencarbonate and ATP and carries out an ATP-coupled ligase reaction, activating hydrogencarbonate by forming carboxy phosphate which reacts with ammonia to form carbamoyl phosphate. The protein is Carbamoyl phosphate synthase large chain of Staphylococcus aureus (strain bovine RF122 / ET3-1).